A 148-amino-acid polypeptide reads, in one-letter code: Transcriptional repressor NrdR (148 aa).

Residues 3-34 (CPFCHNEDTQVLDTRVSDEGDTIRRRRRCAKC) fold into a zinc finger. Positions 49–139 (PAIVKKNGSR…VYRSFADIES (91 aa)) constitute an ATP-cone domain.

This sequence belongs to the NrdR family. Requires Zn(2+) as cofactor.

Functionally, negatively regulates transcription of bacterial ribonucleotide reductase nrd genes and operons by binding to NrdR-boxes. The chain is Transcriptional repressor NrdR from Polynucleobacter necessarius subsp. necessarius (strain STIR1).